The primary structure comprises 508 residues: Steroid 17-alpha-hydroxylase/17,20 lyase (508 aa).

Residue C445 participates in heme binding.

The protein belongs to the cytochrome P450 family. It depends on heme as a cofactor.

The protein localises to the membrane. The catalysed reaction is a C21-steroid + reduced [NADPH--hemoprotein reductase] + O2 = a 17alpha-hydroxy-C21-steroid + oxidized [NADPH--hemoprotein reductase] + H2O + H(+). It catalyses the reaction 17alpha-hydroxyprogesterone + reduced [NADPH--hemoprotein reductase] + O2 = androst-4-ene-3,17-dione + acetate + oxidized [NADPH--hemoprotein reductase] + H2O + 2 H(+). It carries out the reaction 17alpha-hydroxypregnenolone + reduced [NADPH--hemoprotein reductase] + O2 = 3beta-hydroxyandrost-5-en-17-one + acetate + oxidized [NADPH--hemoprotein reductase] + H2O + 2 H(+). It participates in lipid metabolism; steroid biosynthesis. Functionally, conversion of pregnenolone and progesterone to their 17-alpha-hydroxylated products and subsequently to dehydroepiandrosterone (DHEA) and androstenedione. Catalyzes both the 17-alpha-hydroxylation and the 17,20-lyase reaction. The chain is Steroid 17-alpha-hydroxylase/17,20 lyase (CYP17A1) from Gallus gallus (Chicken).